The primary structure comprises 152 residues: Transcription factor XE1.1 (152 aa).

Disordered stretches follow at residues 1-54 (RDDF…ANNA) and 123-152 (KVSAVSAEPPNTHPGVHPGLTDTTNPMGHM). Basic and acidic residues-rich tracts occupy residues 7 to 22 (DDMKSDDESSQKEMKS) and 38 to 54 (PEQKVEREKERRMANNA). In terms of domain architecture, bHLH spans 47–100 (ERRMANNARERLRVRDINEAFKELGRMCQLHLKSEKPQTKLLILHQAVAVILNL). Residues 102–125 (QQVRERNLNPKAACLKRREEEKVS) are class A specific domain. A compositionally biased stretch (polar residues) spans 143–152 (TDTTNPMGHM).

Efficient DNA binding requires dimerization with another bHLH protein. Forms homo- or heterooligomers with myogenin, E12 and ITF2 proteins.

It is found in the nucleus. Functionally, transcriptional regulator. Involved in the initiation of neuronal differentiation. Activates transcription by binding to the E box-containing promoter. The polypeptide is Transcription factor XE1.1 (Xenopus laevis (African clawed frog)).